Reading from the N-terminus, the 98-residue chain is Molybdopterin synthase sulfur carrier subunit (98 aa).

G98 carries the 1-thioglycine; alternate modification. G98 carries the glycyl adenylate; alternate modification.

The protein belongs to the MoaD family. MOCS2A subfamily. In terms of assembly, heterotetramer; composed of 2 small (MOCS2A) and 2 large (MOCS2B) subunits. C-terminal thiocarboxylation occurs in 2 steps, it is first acyl-adenylated (-COAMP) via the hesA/moeB/thiF part of MOCS3, then thiocarboxylated (-COSH) via the rhodanese domain of MOCS3.

The protein localises to the cytoplasm. Its pathway is cofactor biosynthesis; molybdopterin biosynthesis. Acts as a sulfur carrier required for molybdopterin biosynthesis. Component of the molybdopterin synthase complex that catalyzes the conversion of precursor Z into molybdopterin by mediating the incorporation of 2 sulfur atoms into precursor Z to generate a dithiolene group. In the complex, serves as sulfur donor by being thiocarboxylated (-COSH) at its C-terminus by MOCS3. After interaction with MOCS2B, the sulfur is then transferred to precursor Z to form molybdopterin. The polypeptide is Molybdopterin synthase sulfur carrier subunit (Aedes aegypti (Yellowfever mosquito)).